We begin with the raw amino-acid sequence, 512 residues long: ATP synthase subunit alpha 1 (512 aa).

169–176 (GDRQTGKT) contacts ATP.

Belongs to the ATPase alpha/beta chains family. In terms of assembly, F-type ATPases have 2 components, CF(1) - the catalytic core - and CF(0) - the membrane proton channel. CF(1) has five subunits: alpha(3), beta(3), gamma(1), delta(1), epsilon(1). CF(0) has four main subunits: a(1), b(1), b'(1) and c(9-12).

The protein localises to the cell inner membrane. The enzyme catalyses ATP + H2O + 4 H(+)(in) = ADP + phosphate + 5 H(+)(out). Its function is as follows. Produces ATP from ADP in the presence of a proton gradient across the membrane. The alpha chain is a regulatory subunit. This chain is ATP synthase subunit alpha 1, found in Cereibacter sphaeroides (strain ATCC 17029 / ATH 2.4.9) (Rhodobacter sphaeroides).